A 342-amino-acid chain; its full sequence is Arrestin domain-containing protein 5 (342 aa).

It belongs to the arrestin family. In terms of tissue distribution, testis-enriched.

It localises to the membrane. Its function is as follows. Plays an essential role in spermatogenesis. May be involved in the anchoring of the sperm head to the tail during spermatogenesis by affecting SEC22A-mediated SUN5 and NDC1 transport and localization. This is Arrestin domain-containing protein 5 (ARRDC5) from Homo sapiens (Human).